A 150-amino-acid chain; its full sequence is Cytochrome c oxidase subunit 5A, mitochondrial (150 aa).

The transit peptide at 1–41 (MLGTALRRCAVAAASRAGPRGLQHPAPVPGPTAAIQSIRCY) directs the protein to the mitochondrion. Residues 2–17 (LGTALRRCAVAAASRA) carry the SIFI-degron motif. N6-acetyllysine occurs at positions 87 and 113. Threonine 141 bears the Phosphothreonine mark.

Belongs to the cytochrome c oxidase subunit 5A family. As to quaternary structure, component of the cytochrome c oxidase (complex IV, CIV), a multisubunit enzyme composed of 14 subunits. The complex is composed of a catalytic core of 3 subunits MT-CO1, MT-CO2 and MT-CO3, encoded in the mitochondrial DNA, and 11 supernumerary subunits COX4I, COX5A, COX5B, COX6A, COX6B, COX6C, COX7A, COX7B, COX7C, COX8 and NDUFA4, which are encoded in the nuclear genome. The complex exists as a monomer or a dimer and forms supercomplexes (SCs) in the inner mitochondrial membrane with NADH-ubiquinone oxidoreductase (complex I, CI) and ubiquinol-cytochrome c oxidoreductase (cytochrome b-c1 complex, complex III, CIII), resulting in different assemblies (supercomplex SCI(1)III(2)IV(1) and megacomplex MCI(2)III(2)IV(2)). Interacts with AFG1L. Interacts with RAB5IF. Post-translationally, in response to mitochondrial stress, the precursor protein is ubiquitinated by the SIFI complex in the cytoplasm before mitochondrial import, leading to its degradation. Within the SIFI complex, UBR4 initiates ubiquitin chain that are further elongated or branched by KCMF1.

It is found in the mitochondrion inner membrane. The protein operates within energy metabolism; oxidative phosphorylation. Component of the cytochrome c oxidase, the last enzyme in the mitochondrial electron transport chain which drives oxidative phosphorylation. The respiratory chain contains 3 multisubunit complexes succinate dehydrogenase (complex II, CII), ubiquinol-cytochrome c oxidoreductase (cytochrome b-c1 complex, complex III, CIII) and cytochrome c oxidase (complex IV, CIV), that cooperate to transfer electrons derived from NADH and succinate to molecular oxygen, creating an electrochemical gradient over the inner membrane that drives transmembrane transport and the ATP synthase. Cytochrome c oxidase is the component of the respiratory chain that catalyzes the reduction of oxygen to water. Electrons originating from reduced cytochrome c in the intermembrane space (IMS) are transferred via the dinuclear copper A center (CU(A)) of subunit 2 and heme A of subunit 1 to the active site in subunit 1, a binuclear center (BNC) formed by heme A3 and copper B (CU(B)). The BNC reduces molecular oxygen to 2 water molecules using 4 electrons from cytochrome c in the IMS and 4 protons from the mitochondrial matrix. The protein is Cytochrome c oxidase subunit 5A, mitochondrial (COX5A) of Nycticebus coucang (Slow loris).